A 496-amino-acid polypeptide reads, in one-letter code: Cyclin-dependent kinase 16 (496 aa).

The interval 1–95 (MDRMKKIKRQ…SATSSDEVQS (95 aa)) is disordered. Ser12 bears the Phosphoserine; by BRSK2 mark. 7 positions are modified to phosphoserine: Ser36, Ser42, Ser64, Ser65, Ser78, Ser82, and Ser89. The segment covering 69–78 (IVHEDMKMGS) has biased composition (basic and acidic residues). Over residues 83–93 (DQASATSSDEV) the composition is skewed to polar residues. Ser95 carries the phosphoserine; by CDK5 modification. Phosphoserine occurs at positions 110, 119, 138, 146, 153, and 155. Residues 165–446 (YIKLDKLGEG…AEDARKHPFF (282 aa)) form the Protein kinase domain. Residues 171 to 179 (LGEGTYATV) and Lys194 each bind ATP. The residue at position 175 (Thr175) is a Phosphothreonine. The active-site Proton acceptor is the Asp286. Thr380 is modified (phosphothreonine). 3 positions are modified to phosphoserine: Ser391, Ser478, and Ser480.

Belongs to the protein kinase superfamily. CMGC Ser/Thr protein kinase family. CDC2/CDKX subfamily. As to quaternary structure, found in a complex containing CABLES1, CDK17 and TDRD7. Interacts with BRSK2. Identified in a complex with NSF, syntaxin-1, synaptotagmin, SYN1, SYP and CDK5R1. Interacts with YWHAH, YWHAQ and YWHAZ. Interacts with CCNY; this interaction increases the CDK16 kinase activity. Interacts with CCNYL1; this interaction mutually increases the stability of CDK16 and CCNYL1 and increases the kinase activity of CDK16. Interacts with NSF. Post-translationally, phosphorylation of CDK16 is essential for the binding of CCNY, but also essential for the regulation of CDK16 kinase activity. Phosphorylation of CDK16 is essential for the binding of CCNYl1, but also essential for the regulation of CDK16 kinase activity. Ser-146 and Ser-153 are the critical sites for the binding of CCNYL1 and for modulating CDK16 kinase activity. Phosphorylation at Ser-153 inhibits kinase activity. Highly expressed in testis and brain, and detected at lower levels in heart, skeletal muscle, adipose tissue, lung, spleen and pancreas (at protein level). Ubiquitous with highest levels in testis and brain, with longer form predominant in all tissues except the testis.

It is found in the cytoplasm. The protein localises to the cytoplasmic vesicle. The protein resides in the secretory vesicle. Its subcellular location is the cell membrane. It localises to the synapse. It is found in the synaptosome. It carries out the reaction L-seryl-[protein] + ATP = O-phospho-L-seryl-[protein] + ADP + H(+). The catalysed reaction is L-threonyl-[protein] + ATP = O-phospho-L-threonyl-[protein] + ADP + H(+). Its function is as follows. Protein kinase that plays a role in vesicle-mediated transport processes and exocytosis. Can phosphorylate CCNY at 'Ser-336' (in vitro). Plays a role in the regulation of insulin secretion in response to changes in blood glucose levels. Regulates GH1 release by brain neurons. Phosphorylates NSF, and thereby regulates NSF oligomerization. Required for normal spermatogenesis. Regulates neuron differentiation and dendrite development. This Mus musculus (Mouse) protein is Cyclin-dependent kinase 16 (Cdk16).